The sequence spans 271 residues: Formamidopyrimidine-DNA glycosylase (271 aa).

Pro-2 acts as the Schiff-base intermediate with DNA in catalysis. The Proton donor role is filled by Glu-3. Catalysis depends on Lys-57, which acts as the Proton donor; for beta-elimination activity. DNA is bound by residues His-90, Arg-109, and Lys-151. Residues His-236–Lys-270 form an FPG-type zinc finger. Arg-260 (proton donor; for delta-elimination activity) is an active-site residue.

It belongs to the FPG family. In terms of assembly, monomer. The cofactor is Zn(2+).

The enzyme catalyses Hydrolysis of DNA containing ring-opened 7-methylguanine residues, releasing 2,6-diamino-4-hydroxy-5-(N-methyl)formamidopyrimidine.. The catalysed reaction is 2'-deoxyribonucleotide-(2'-deoxyribose 5'-phosphate)-2'-deoxyribonucleotide-DNA = a 3'-end 2'-deoxyribonucleotide-(2,3-dehydro-2,3-deoxyribose 5'-phosphate)-DNA + a 5'-end 5'-phospho-2'-deoxyribonucleoside-DNA + H(+). Its function is as follows. Involved in base excision repair of DNA damaged by oxidation or by mutagenic agents. Acts as a DNA glycosylase that recognizes and removes damaged bases. Has a preference for oxidized purines, such as 7,8-dihydro-8-oxoguanine (8-oxoG). Has AP (apurinic/apyrimidinic) lyase activity and introduces nicks in the DNA strand. Cleaves the DNA backbone by beta-delta elimination to generate a single-strand break at the site of the removed base with both 3'- and 5'-phosphates. This chain is Formamidopyrimidine-DNA glycosylase, found in Shewanella halifaxensis (strain HAW-EB4).